Here is a 428-residue protein sequence, read N- to C-terminus: MTRSHDLFKAAQRHIPGGVNSPVRAFKGVGGDPVFIQRAEGAYMYDADGKRYIDYVGSWGPMIAGHAHPEVVEAVREAARGGLSFGAPTEIEIRMAERVCELVPSMDMVRMVSSGTEATMSAIRLARGFTGRDKIIKFEGCYHGHGDSLLVKAGSGALTLGVPSSPGVPAALAEHTLTLTYNDLDEVRETLAHVGGQVACIIVEPVAGNMNCIPPVPGFLEGLRELCDEYGALLIFDEVMTGFRVALGGAQAHYGVKPDLTTLGKIIGGGMPVGAFGGRREVMEQLAPLGPVYQAGTLSGNPVAMAAGLKTLEIISRPGFYDELTRKTRVMVDGVLTAAGEAGIPMTANQVGGMFGLFFSEQPVTNFYQATQCDLDRFRLFFHEMLERGVYLAPSAYEAGFVSSAHSEADLAETIEAAARSLREVSGN.

K265 is modified (N6-(pyridoxal phosphate)lysine).

It belongs to the class-III pyridoxal-phosphate-dependent aminotransferase family. HemL subfamily. Homodimer. Pyridoxal 5'-phosphate is required as a cofactor.

It is found in the cytoplasm. It catalyses the reaction (S)-4-amino-5-oxopentanoate = 5-aminolevulinate. The protein operates within porphyrin-containing compound metabolism; protoporphyrin-IX biosynthesis; 5-aminolevulinate from L-glutamyl-tRNA(Glu): step 2/2. This chain is Glutamate-1-semialdehyde 2,1-aminomutase, found in Thioalkalivibrio sulfidiphilus (strain HL-EbGR7).